The chain runs to 396 residues: D-alanine--D-alanine ligase (396 aa).

Positions 141–347 (KMLWQAAGLP…PQDLMAQLLS (207 aa)) constitute an ATP-grasp domain. ATP is bound at residue 174-229 (ETRLGYPLFVKPAQAGSSVGASAVQTRAPLIPAIEAAFQWDEVVLVERYVRAREIE). Asp301, Glu314, and Asn316 together coordinate Mg(2+). Residues 374 to 396 (AAHDPDAQGDDWDQRDSNPLPTA) are disordered.

It belongs to the D-alanine--D-alanine ligase family. Mg(2+) serves as cofactor. Requires Mn(2+) as cofactor.

The protein resides in the cytoplasm. It carries out the reaction 2 D-alanine + ATP = D-alanyl-D-alanine + ADP + phosphate + H(+). It participates in cell wall biogenesis; peptidoglycan biosynthesis. Cell wall formation. This is D-alanine--D-alanine ligase from Treponema pallidum (strain Nichols).